A 122-amino-acid polypeptide reads, in one-letter code: Histone H2B, gonadal (122 aa).

The disordered stretch occupies residues 1–31 (MPPKVSSKGAKKAGKAKAARSGDKKRKRRRK). A compositionally biased stretch (basic residues) spans 9-31 (GAKKAGKAKAARSGDKKRKRRRK). S109 carries an O-linked (GlcNAc) serine glycan. Residue K117 forms a Glycyl lysine isopeptide (Lys-Gly) (interchain with G-Cter in ubiquitin) linkage.

Belongs to the histone H2B family. As to quaternary structure, the nucleosome is a histone octamer containing two molecules each of H2A, H2B, H3 and H4 assembled in one H3-H4 heterotetramer and two H2A-H2B heterodimers. The octamer wraps approximately 147 bp of DNA. Monoubiquitination of Lys-117 gives a specific tag for epigenetic transcriptional activation and is also prerequisite for histone H3 'Lys-4' and 'Lys-79' methylation. Post-translationally, glcNAcylation at Ser-109 promotes monoubiquitination of Lys-117. It fluctuates in response to extracellular glucose, and associates with transcribed genes.

It is found in the nucleus. The protein localises to the chromosome. Its function is as follows. Core component of nucleosome. Nucleosomes wrap and compact DNA into chromatin, limiting DNA accessibility to the cellular machineries which require DNA as a template. Histones thereby play a central role in transcription regulation, DNA repair, DNA replication and chromosomal stability. DNA accessibility is regulated via a complex set of post-translational modifications of histones, also called histone code, and nucleosome remodeling. In Patella granatina (Sandpaper limpet), this protein is Histone H2B, gonadal.